A 631-amino-acid chain; its full sequence is Glutamyl-tRNA(Gln) amidotransferase subunit E (631 aa).

It belongs to the GatB/GatE family. GatE subfamily. Heterodimer of GatD and GatE.

The catalysed reaction is L-glutamyl-tRNA(Gln) + L-glutamine + ATP + H2O = L-glutaminyl-tRNA(Gln) + L-glutamate + ADP + phosphate + H(+). Functionally, allows the formation of correctly charged Gln-tRNA(Gln) through the transamidation of misacylated Glu-tRNA(Gln) in organisms which lack glutaminyl-tRNA synthetase. The reaction takes place in the presence of glutamine and ATP through an activated gamma-phospho-Glu-tRNA(Gln). The GatDE system is specific for glutamate and does not act on aspartate. This is Glutamyl-tRNA(Gln) amidotransferase subunit E from Methanococcus maripaludis (strain C5 / ATCC BAA-1333).